Consider the following 602-residue polypeptide: Elongation factor 4 (602 aa).

The 183-residue stretch at 7-189 (RNIRNFSIIA…AIVHRIPPPK (183 aa)) folds into the tr-type G domain. Residues 19 to 24 (DHGKST) and 136 to 139 (NKID) contribute to the GTP site.

The protein belongs to the TRAFAC class translation factor GTPase superfamily. Classic translation factor GTPase family. LepA subfamily.

The protein localises to the cell inner membrane. It catalyses the reaction GTP + H2O = GDP + phosphate + H(+). Functionally, required for accurate and efficient protein synthesis under certain stress conditions. May act as a fidelity factor of the translation reaction, by catalyzing a one-codon backward translocation of tRNAs on improperly translocated ribosomes. Back-translocation proceeds from a post-translocation (POST) complex to a pre-translocation (PRE) complex, thus giving elongation factor G a second chance to translocate the tRNAs correctly. Binds to ribosomes in a GTP-dependent manner. The polypeptide is Elongation factor 4 (Stenotrophomonas maltophilia (strain R551-3)).